The primary structure comprises 321 residues: Fructose-1,6-bisphosphatase 2 class 2 (321 aa).

4 residues coordinate Mn(2+): Asp32, Glu56, Asp84, and Glu87. Residues 87–89 (EGT), Tyr118, 163–165 (KPR), 185–187 (DGD), and Gly209 each bind substrate. Glu212 contacts Mn(2+).

It belongs to the FBPase class 2 family. Homodimer. The cofactor is Mn(2+).

It catalyses the reaction beta-D-fructose 1,6-bisphosphate + H2O = beta-D-fructose 6-phosphate + phosphate. With respect to regulation, competitively inhibited by low concentrations of phosphate (IC50 of 1.2 mM) and is also sensitive to Li(+) (IC50 of 15.8 mM). Also inhibited by 1 mM ATP or 50 mM KCl (60% and 20% residual activity, respectively). Slightly activated (40-50%) by the addition of 1 mM dithiothreitol in vitro. In terms of biological role, catalyzes the hydrolysis of fructose 1,6-bisphosphate to fructose 6-phosphate. Also displays a low activity toward glucose 1,6-bisphosphate, and no activity against ribulose 1,5-bisphosphate, fructose 2,6-bisphosphate, or fructose 1-phosphate. In Escherichia coli (strain K12), this protein is Fructose-1,6-bisphosphatase 2 class 2 (yggF).